The chain runs to 174 residues: Protein CURVATURE THYLAKOID 1B, chloroplastic (174 aa).

The segment at 1-20 (MASLSVSSSSTIIDSRAPPS) is disordered. A chloroplast-targeting transit peptide spans 1-63 (MASLSVSSSS…RKIVRNVVTR (63 aa)). Ala-64 carries the N-acetylalanine modification. Topologically, residues 64 to 100 (ATTEVGEAPATTTEAETTELPEIVKTAQEAWEKVDDK) are stromal. The chain crosses the membrane as a helical span at residues 101–121 (YAIGSLAFAGVVALWGSAGMI). Over 122–126 (SAIDR) the chain is Lumenal. A helical membrane pass occupies residues 127 to 147 (LPLVPGVLELVGIGYTGWFTY). The Stromal segment spans residues 148-174 (KNLVFKPDREALFEKVKSTYKDILGSS).

Belongs to the CURT family. Homo- and heterodimers and trimers. Interacts with PSAL. Post-translationally, phosphorylated on either Thr-65 or Thr-66 by a threonine specific thylakoid kinase.

The protein resides in the plastid. It is found in the chloroplast thylakoid membrane. In terms of biological role, determines thylakoid architecture by inducing membrane curvature. In Arabidopsis thaliana (Mouse-ear cress), this protein is Protein CURVATURE THYLAKOID 1B, chloroplastic (CURT1B).